Consider the following 732-residue polypeptide: Protein FAR1-RELATED SEQUENCE 4 (732 aa).

The FAR1 domain occupies 11 to 97 (LFYKDYAKSV…VKEHNHDLLP (87 aa)). The MULE domain occupies 212-308 (VVSFETSYFV…CLWHVLDQLP (97 aa)). The segment at 490 to 526 (YLVDWDEFKSDIYCSCRSFEYKGYLCRHAIVVLQMSG) adopts an SWIM-type zinc-finger fold. A disordered region spans residues 623 to 683 (QEENQYGSTS…ETVGEGSQEG (61 aa)). A compositionally biased stretch (polar residues) spans 624–635 (EENQYGSTSTQI).

The protein belongs to the FHY3/FAR1 family. Expressed in hypocotyls, rosette and cauline leaves, inflorescences stems, flowers and siliques.

It localises to the nucleus. Putative transcription activator involved in regulating light control of development. This Arabidopsis thaliana (Mouse-ear cress) protein is Protein FAR1-RELATED SEQUENCE 4 (FRS4).